The chain runs to 4218 residues: Protein Obscurin (4218 aa).

Positions 3–71 constitute an SH3 domain; that stretch reads AVADIVFVSR…PIDILEFNPT (69 aa). The 179-residue stretch at 86 to 264 folds into the DH domain; the sequence is RKLTILRELV…LSVPSRAYDN (179 aa). Positions 439–466 form a coiled coil; it reads SKETKERLQHEQQELLKLEQEAIELYKK. Disordered regions lie at residues 465–592, 684–703, 728–750, and 923–1010; these read KKQQ…SHSK, SLRD…QQGY, SGAN…NFTR, and RYET…EDRP. Composition is skewed to low complexity over residues 466-490 and 505-517; these read KQQS…VKSS and AQVK…KVVS. A compositionally biased stretch (basic and acidic residues) spans 578–592; that stretch reads KEVRKEVPPSASHSK. The span at 923 to 935 shows a compositional bias: basic and acidic residues; it reads RYETKTRDYDRGT. Residues 936 to 948 show a composition bias toward polar residues; it reads SYDSTVERSQYGI. 2 stretches are compositionally biased toward basic and acidic residues: residues 950-962 and 972-986; these read SRRD…KVEA and TESR…RAES. Residues 987–996 show a composition bias toward low complexity; it reads RASYSVAESR. 15 Ig-like C2-type domains span residues 1017–1103, 1152–1298, 1313–1400, 1504–1594, 1599–1689, 1694–1785, 1815–1906, 2018–2107, 2113–2214, 2220–2305, 2318–2409, 2415–2505, 2519–2609, 2614–2698, and 2716–2792; these read PVVV…TTVS, PRVK…AELS, PTLV…SSIN, PVIV…TQLL, PEFT…CVVT, PKVK…CKVA, PEIV…LSLS, PEIS…FNLA, PTFI…FKLA, PSFV…EKVA, PKFL…VEIV, PVFV…AKLY, PQFV…ANVR, PPVF…KDIT, and PPVF…SCRI. A disulfide bridge links Cys-1199 with Cys-1282. Cys-2739 and Cys-2790 are disulfide-bonded. A Fibronectin type-III 1 domain is found at 2832–2933; it reads APPPLSEGPI…TYRQKLVPDP (102 aa). The region spanning 3186–3440 is the Protein kinase 1 domain; the sequence is YDIGDELGRG…VKTALKHPWF (255 aa). ATP-binding residues include Gly-3198, Lys-3215, Glu-3260, Ala-3262, Glu-3266, Lys-3310, and Asp-3326. Residues 3654-3738 form the Ig-like C2-type 16 domain; the sequence is PFFREKPQTI…ARNKVGQTVA (85 aa). In terms of domain architecture, Fibronectin type-III 2 spans 3750–3843; sequence APDSPEISAN…IPVSASTVGG (94 aa). Residues 3897 to 4151 form the Protein kinase 2 domain; sequence YSFISEIARG…TEDCLEHRWL (255 aa).

It belongs to the protein kinase superfamily. CAMK Ser/Thr protein kinase family. As to quaternary structure, interacts with myosin. May interact (via protein kinase domain 1) with ball. May interact (via protein kinase domain 1 or 2) with mask. May interact (via protein kinase domain 2) with Tm1/tropomyosin-1. Expressed in the thoracic muscles including the indirect flight muscles (IFM) (at protein level).

The protein localises to the cytoplasm. It localises to the myofibril. The protein resides in the sarcomere. Its subcellular location is the m line. Functionally, structural component of the muscle M line which is involved in assembly and organization of sarcomere. Required for the development and organization of indirect flight muscle sarcomeres by regulating the formation of M line and H zone and the correct assembly of thick and thin filaments in the sarcomere. Lacks serine/threonine-protein kinase activity. The sequence is that of Protein Obscurin from Drosophila melanogaster (Fruit fly).